Here is a 1205-residue protein sequence, read N- to C-terminus: Nitric oxide synthase 3 (1205 aa).

The disordered stretch occupies residues 1 to 73; sequence MGNLKSVGQE…PPDGPKFPRV (73 aa). Gly2 carries N-myristoyl glycine lipidation. 2 S-palmitoyl cysteine lipidation sites follow: Cys15 and Cys26. Gly residues predominate over residues 15–27; that stretch reads CGLGLGLGLGLCG. The segment covering 44–54 has biased composition (pro residues); that stretch reads LAPPPSPPPAP. Zn(2+)-binding residues include Cys96 and Cys101. Residues 100–488 form an interaction with NOSIP region; the sequence is RCLGSLVFPR…TDPWKGSASK (389 aa). Ser104 serves as a coordination point for (6R)-L-erythro-5,6,7,8-tetrahydrobiopterin. Ser116 is modified (phosphoserine; by CDK5). Position 186 (Cys186) interacts with heme b. L-arginine-binding residues include Gln249, Trp358, Tyr359, Glu363, and Asn368. Ala448, Trp449, and Phe462 together coordinate (6R)-L-erythro-5,6,7,8-tetrahydrobiopterin. A heme b-binding site is contributed by Tyr477. Positions 492–512 are calmodulin-binding; the sequence is VTRKKTFKEVANAVKISASLM. Position 497 is a phosphothreonine; by AMPK (Thr497). Residues 522–705 form the Flavodoxin-like domain; sequence ATILYGSETG…AFGGWAQAAF (184 aa). 6 residues coordinate FMN: Ser528, Glu529, Thr530, Arg532, Ser574, and Thr575. 3 positions are modified to phosphoserine: Ser617, Ser635, and Ser640. FMN is bound by residues Ser656, Cys663, Glu689, and Gln693. The FAD-binding FR-type domain maps to 758-1004; sequence RKMVQATVLA…IRGAPSFRLP (247 aa). NADP(+) is bound at residue Arg778. His800 is an FAD binding site. Residues 819–850 are disordered; sequence VEDPPPPGEPVAVEQLEKGSPGGPPPSWVRDP. Phosphoserine is present on Ser838. The FAD site is built by Arg940, Tyr942, Ser943, Thr958, Ala960, Tyr964, Val977, Cys978, and Ser979. NADP(+)-binding residues include Thr1018, Arg1051, Ser1080, Arg1081, Lys1087, Tyr1089, and Gln1091. Phosphothreonine is present on Thr1177. Ser1179 carries the post-translational modification Phosphoserine; by AMPK. Ser1181 is modified (phosphoserine).

The protein belongs to the NOS family. In terms of assembly, homodimer. Interacts with NOSIP and NOSTRIN. Interacts with HSP90AB1. Forms a complex with ASL, ASS1 and SLC7A1; the complex regulates cell-autonomous L-arginine synthesis and citrulline recycling while channeling extracellular L-arginine to nitric oxide synthesis pathway. The cofactor is heme b. Requires FAD as cofactor. FMN is required as a cofactor. (6R)-L-erythro-5,6,7,8-tetrahydrobiopterin serves as cofactor. Post-translationally, phosphorylation by AMPK at Ser-1179 in the presence of Ca(2+)-calmodulin (CaM) activates activity. In absence of Ca(2+)-calmodulin, AMPK also phosphorylates Thr-497, resulting in inhibition of activity. Phosphorylation of Ser-116 by CDK5 reduces activity.

It localises to the membrane. Its subcellular location is the caveola. The protein resides in the cytoplasm. The protein localises to the cytoskeleton. It is found in the golgi apparatus. It localises to the cell membrane. It catalyses the reaction 2 L-arginine + 3 NADPH + 4 O2 + H(+) = 2 L-citrulline + 2 nitric oxide + 3 NADP(+) + 4 H2O. With respect to regulation, stimulated by calcium/calmodulin. Inhibited by NOSIP and NOSTRIN. In terms of biological role, produces nitric oxide (NO) which is implicated in vascular smooth muscle relaxation through a cGMP-mediated signal transduction pathway. NO mediates vascular endothelial growth factor (VEGF)-induced angiogenesis in coronary vessels and promotes blood clotting through the activation of platelets. This Canis lupus familiaris (Dog) protein is Nitric oxide synthase 3 (NOS3).